A 273-amino-acid chain; its full sequence is Putative peptidyl-prolyl cis-trans isomerase Cbf2 (273 aa).

Positions 1–21 (MKKFSLVAATLIAGVVLNVNA) are cleaved as a signal peptide. The PpiC domain occupies 131-228 (PARVQAKHIL…FGYHVILKEN (98 aa)).

It catalyses the reaction [protein]-peptidylproline (omega=180) = [protein]-peptidylproline (omega=0). The chain is Putative peptidyl-prolyl cis-trans isomerase Cbf2 (cbf2) from Campylobacter jejuni subsp. jejuni serotype O:2 (strain ATCC 700819 / NCTC 11168).